Reading from the N-terminus, the 154-residue chain is Large ribosomal subunit protein uL13 (154 aa).

Belongs to the universal ribosomal protein uL13 family. Part of the 50S ribosomal subunit.

This protein is one of the early assembly proteins of the 50S ribosomal subunit, although it is not seen to bind rRNA by itself. It is important during the early stages of 50S assembly. The sequence is that of Large ribosomal subunit protein uL13 from Rhodopseudomonas palustris (strain BisB18).